We begin with the raw amino-acid sequence, 63 residues long: Putative F-box protein At1g47702 (63 aa).

The 41-residue stretch at 23–63 folds into the F-box domain; that stretch reads KDRISDLPNRILGKIIVKLPLDEAVRIMALSKRWKSIWDDN.

The protein is Putative F-box protein At1g47702 of Arabidopsis thaliana (Mouse-ear cress).